The primary structure comprises 638 residues: Phosphomethylpyrimidine synthase (638 aa).

Substrate contacts are provided by residues Asn236, Met265, Tyr294, His330, 350 to 352 (SRG), 391 to 394 (DGLR), and Glu430. His434 lines the Zn(2+) pocket. Tyr457 is a binding site for substrate. Residue His498 coordinates Zn(2+). [4Fe-4S] cluster contacts are provided by Cys578, Cys581, and Cys586.

It belongs to the ThiC family. Homodimer. The cofactor is [4Fe-4S] cluster.

It carries out the reaction 5-amino-1-(5-phospho-beta-D-ribosyl)imidazole + S-adenosyl-L-methionine = 4-amino-2-methyl-5-(phosphooxymethyl)pyrimidine + CO + 5'-deoxyadenosine + formate + L-methionine + 3 H(+). Its pathway is cofactor biosynthesis; thiamine diphosphate biosynthesis. Functionally, catalyzes the synthesis of the hydroxymethylpyrimidine phosphate (HMP-P) moiety of thiamine from aminoimidazole ribotide (AIR) in a radical S-adenosyl-L-methionine (SAM)-dependent reaction. The polypeptide is Phosphomethylpyrimidine synthase (Polaromonas sp. (strain JS666 / ATCC BAA-500)).